The primary structure comprises 751 residues: Nucleoporin NUP37 (751 aa).

Residues 21–65 (SLGRRIYDVKTYPVQSPQGATILIYGHENGATVVWRGGRRLKPPK) form a WD 1 repeat. The disordered stretch occupies residues 57 to 77 (GGRRLKPPKPQTNEKRNGTKP). The segment covering 68 to 77 (TNEKRNGTKP) has biased composition (basic and acidic residues). 4 WD repeats span residues 162–209 (TNDV…LTGP), 237–271 (AQAAPITRVVVAAHSREASGTLRLWDVPLEAKPGT), 282–322 (YLPS…LPSD), and 351–390 (TSRKPIVAAEWIARGRAILTLLADGQWGIWDLDGASPTAA). Residues 419 to 443 (EGTSPLRNPTTQKASSSSSGEFVPM) are disordered. Positions 423 to 438 (PLRNPTTQKASSSSSG) are enriched in polar residues. WD repeat units lie at residues 455–492 (AFGGSPEKLAAVRGGITVAQLPSTLTSGAGDESAVLFL) and 494–534 (GADP…RMIR). Positions 671–692 (IPSTDAGDEETIPATSAPSSQQ) are disordered. Polar residues predominate over residues 683–692 (PATSAPSSQQ). Positions 716-750 (RDVEQELLDIMEIDRELEQLEQARERGRKRVFFEE) form a coiled coil.

The nuclear pore complex (NPC) constitutes the exclusive means of nucleocytoplasmic transport. NPCs allow the passive diffusion of ions and small molecules and the active, nuclear transport receptor-mediated bidirectional transport of macromolecules such as proteins, RNAs, ribonucleoparticles (RNPs), and ribosomal subunits across the nuclear envelope. The 55-60 MDa NPC is composed of at least 28 different subunits: AMO1, ELYS, GLE1, GLE2, MLP1, NDC1, NIC96, NSP1, NUP133, NUP145, NUP152, NUP159, NUP170, NUP188, NUP192, NUP37, NUP49, NUP53, NUP56, NUP57, NUP82, NUP84, NUP85, POM152, POM33, POM34, SEC13 and SEH1. Due to its 8-fold rotational symmetry, all subunits are present with 8 copies or multiples thereof.

It localises to the nucleus. The protein localises to the nuclear pore complex. The sequence is that of Nucleoporin NUP37 (NUP37) from Chaetomium thermophilum (strain DSM 1495 / CBS 144.50 / IMI 039719) (Thermochaetoides thermophila).